Consider the following 245-residue polypeptide: NAD(P)H-quinone oxidoreductase subunit K (245 aa).

[4Fe-4S] cluster is bound by residues Cys58, Cys59, Cys123, and Cys154.

It belongs to the complex I 20 kDa subunit family. As to quaternary structure, NDH-1 can be composed of about 15 different subunits; different subcomplexes with different compositions have been identified which probably have different functions. It depends on [4Fe-4S] cluster as a cofactor.

It localises to the cellular thylakoid membrane. The enzyme catalyses a plastoquinone + NADH + (n+1) H(+)(in) = a plastoquinol + NAD(+) + n H(+)(out). It catalyses the reaction a plastoquinone + NADPH + (n+1) H(+)(in) = a plastoquinol + NADP(+) + n H(+)(out). NDH-1 shuttles electrons from an unknown electron donor, via FMN and iron-sulfur (Fe-S) centers, to quinones in the respiratory and/or the photosynthetic chain. The immediate electron acceptor for the enzyme in this species is believed to be plastoquinone. Couples the redox reaction to proton translocation, and thus conserves the redox energy in a proton gradient. Cyanobacterial NDH-1 also plays a role in inorganic carbon-concentration. The polypeptide is NAD(P)H-quinone oxidoreductase subunit K (Trichormus variabilis (strain ATCC 29413 / PCC 7937) (Anabaena variabilis)).